The sequence spans 273 residues: 1,4-dihydroxy-2-naphthoyl-CoA synthase (273 aa).

Substrate is bound by residues Arg-34, 73–77, Tyr-85, 117–121, Thr-143, Ser-149, Tyr-246, and Lys-261; these read SGGDQ and YAVGG. A hydrogencarbonate-binding site is contributed by 142-144; it reads QTG. Over residues 254 to 265 the composition is skewed to basic and acidic residues; sequence GRDAFKEKRDPD. Positions 254–273 are disordered; the sequence is GRDAFKEKRDPDFDQFPKFP.

The protein belongs to the enoyl-CoA hydratase/isomerase family. MenB subfamily. It depends on hydrogencarbonate as a cofactor.

The enzyme catalyses 2-succinylbenzoyl-CoA + H(+) = 1,4-dihydroxy-2-naphthoyl-CoA + H2O. The protein operates within quinol/quinone metabolism; 1,4-dihydroxy-2-naphthoate biosynthesis; 1,4-dihydroxy-2-naphthoate from chorismate: step 6/7. It participates in quinol/quinone metabolism; menaquinone biosynthesis. In terms of biological role, converts o-succinylbenzoyl-CoA (OSB-CoA) to 1,4-dihydroxy-2-naphthoyl-CoA (DHNA-CoA). This is 1,4-dihydroxy-2-naphthoyl-CoA synthase from Staphylococcus aureus (strain MSSA476).